The sequence spans 370 residues: Polygalacturonase 1 (370 aa).

The N-terminal stretch at 1-18 (MRTSILSMLALGAAAVSA) is a signal peptide. A disulfide bond links Cys-36 and Cys-51. PbH1 repeat units follow at residues 163–194 (ADNL…DVGE), 195–216 (STYI…AINS), 217–237 (GENI…SIGS), 246–267 (VKNV…RIKT), and 275–297 (VADV…VIEQ). The active-site Proton donor is the Asp-209. Cys-211 and Cys-227 form a disulfide bridge. His-231 is a catalytic residue. Asn-248 carries N-linked (GlcNAc...) asparagine glycosylation. 2 cysteine pairs are disulfide-bonded: Cys-337–Cys-342 and Cys-361–Cys-370.

The protein belongs to the glycosyl hydrolase 28 family.

Its subcellular location is the secreted. The enzyme catalyses (1,4-alpha-D-galacturonosyl)n+m + H2O = (1,4-alpha-D-galacturonosyl)n + (1,4-alpha-D-galacturonosyl)m.. In Penicillium olsonii, this protein is Polygalacturonase 1 (PG1).